A 227-amino-acid chain; its full sequence is Cytochrome c oxidase subunit 2 (227 aa).

At 1 to 26 the chain is on the mitochondrial intermembrane side; the sequence is MATWSNLSLQDGASPLMEQLSFFHDH. The helical transmembrane segment at 27 to 48 threads the bilayer; that stretch reads TMIDLLLITMIVGYSLSYMLLT. Residues 49-62 are Mitochondrial matrix-facing; that stretch reads KYTNRNMLHGHLIE. A helical transmembrane segment spans residues 63–82; the sequence is TIWTALPAITLIFIALPSLR. Over 83–227 the chain is Mitochondrial intermembrane; the sequence is LLYLLDDSSD…LFIKWLSNMM (145 aa). 6 residues coordinate Cu cation: His-161, Cys-196, Glu-198, Cys-200, His-204, and Met-207. Position 198 (Glu-198) interacts with Mg(2+).

This sequence belongs to the cytochrome c oxidase subunit 2 family. Component of the cytochrome c oxidase (complex IV, CIV), a multisubunit enzyme composed of a catalytic core of 3 subunits and several supernumerary subunits. The complex exists as a monomer or a dimer and forms supercomplexes (SCs) in the inner mitochondrial membrane with ubiquinol-cytochrome c oxidoreductase (cytochrome b-c1 complex, complex III, CIII). Requires Cu cation as cofactor.

The protein localises to the mitochondrion inner membrane. It carries out the reaction 4 Fe(II)-[cytochrome c] + O2 + 8 H(+)(in) = 4 Fe(III)-[cytochrome c] + 2 H2O + 4 H(+)(out). Component of the cytochrome c oxidase, the last enzyme in the mitochondrial electron transport chain which drives oxidative phosphorylation. The respiratory chain contains 3 multisubunit complexes succinate dehydrogenase (complex II, CII), ubiquinol-cytochrome c oxidoreductase (cytochrome b-c1 complex, complex III, CIII) and cytochrome c oxidase (complex IV, CIV), that cooperate to transfer electrons derived from NADH and succinate to molecular oxygen, creating an electrochemical gradient over the inner membrane that drives transmembrane transport and the ATP synthase. Cytochrome c oxidase is the component of the respiratory chain that catalyzes the reduction of oxygen to water. Electrons originating from reduced cytochrome c in the intermembrane space (IMS) are transferred via the dinuclear copper A center (CU(A)) of subunit 2 and heme A of subunit 1 to the active site in subunit 1, a binuclear center (BNC) formed by heme A3 and copper B (CU(B)). The BNC reduces molecular oxygen to 2 water molecules using 4 electrons from cytochrome c in the IMS and 4 protons from the mitochondrial matrix. This chain is Cytochrome c oxidase subunit 2 (COII), found in Locusta migratoria (Migratory locust).